Reading from the N-terminus, the 638-residue chain is Actin-regulating kinase 1 (638 aa).

In terms of domain architecture, Protein kinase spans 22 to 298 (VEIIKYLTSG…VYQLLKRISI (277 aa)). Residues 28 to 36 (LTSGGFAQV) and Lys56 contribute to the ATP site. The Proton acceptor role is filled by Asp159. Position 478 is a phosphoserine (Ser478). The segment covering 482-515 (YSTRGNIKKNQSVKESLTSSSLPGTSFTPTSTKV) has biased composition (polar residues). The segment at 482 to 518 (YSTRGNIKKNQSVKESLTSSSLPGTSFTPTSTKVNLK) is disordered. A phosphoserine mark is found at Ser522 and Ser535. Positions 569–638 (SEESFNARKM…LAGRKLSLDK (70 aa)) are disordered. The span at 582-593 (KLHEKGEIDKPT) shows a compositional bias: basic and acidic residues. Residues 602-615 (SKDKKTKPTPPPKP) are interaction with SH3 domain of ABP1.

It belongs to the protein kinase superfamily. Ser/Thr protein kinase family. As to quaternary structure, interacts with ABP1, which is required for proper actin patch localization.

The protein resides in the cytoplasm. It localises to the cytoskeleton. It is found in the actin patch. It catalyses the reaction L-seryl-[protein] + ATP = O-phospho-L-seryl-[protein] + ADP + H(+). The catalysed reaction is L-threonyl-[protein] + ATP = O-phospho-L-threonyl-[protein] + ADP + H(+). Involved in regulation of actin cytoskeleton organization and endocytosis. This chain is Actin-regulating kinase 1 (ARK1), found in Saccharomyces cerevisiae (strain ATCC 204508 / S288c) (Baker's yeast).